Consider the following 445-residue polypeptide: Glucose-6-phosphate isomerase (445 aa).

E284 serves as the catalytic Proton donor. Residues H305 and K419 contribute to the active site.

It belongs to the GPI family.

It localises to the cytoplasm. It catalyses the reaction alpha-D-glucose 6-phosphate = beta-D-fructose 6-phosphate. The protein operates within carbohydrate biosynthesis; gluconeogenesis. Its pathway is carbohydrate degradation; glycolysis; D-glyceraldehyde 3-phosphate and glycerone phosphate from D-glucose: step 2/4. Catalyzes the reversible isomerization of glucose-6-phosphate to fructose-6-phosphate. The polypeptide is Glucose-6-phosphate isomerase (Leptospira interrogans serogroup Icterohaemorrhagiae serovar Lai (strain 56601)).